The chain runs to 181 residues: Large ribosomal subunit protein uL5 (181 aa).

This sequence belongs to the universal ribosomal protein uL5 family. In terms of assembly, part of the 50S ribosomal subunit; part of the 5S rRNA/L5/L18/L25 subcomplex. Contacts the 5S rRNA and the P site tRNA. Forms a bridge to the 30S subunit in the 70S ribosome.

In terms of biological role, this is one of the proteins that bind and probably mediate the attachment of the 5S RNA into the large ribosomal subunit, where it forms part of the central protuberance. In the 70S ribosome it contacts protein S13 of the 30S subunit (bridge B1b), connecting the 2 subunits; this bridge is implicated in subunit movement. Contacts the P site tRNA; the 5S rRNA and some of its associated proteins might help stabilize positioning of ribosome-bound tRNAs. This chain is Large ribosomal subunit protein uL5, found in Sulfurimonas denitrificans (strain ATCC 33889 / DSM 1251) (Thiomicrospira denitrificans (strain ATCC 33889 / DSM 1251)).